A 76-amino-acid chain; its full sequence is Acyl carrier protein (76 aa).

Positions 1–76 constitute a Carrier domain; sequence MSIEERVKKI…SAIDYVQNNQ (76 aa). Position 36 is an O-(pantetheine 4'-phosphoryl)serine (Ser-36).

The protein belongs to the acyl carrier protein (ACP) family. 4'-phosphopantetheine is transferred from CoA to a specific serine of apo-ACP by AcpS. This modification is essential for activity because fatty acids are bound in thioester linkage to the sulfhydryl of the prosthetic group.

The protein resides in the cytoplasm. It participates in lipid metabolism; fatty acid biosynthesis. In terms of biological role, carrier of the growing fatty acid chain in fatty acid biosynthesis. The polypeptide is Acyl carrier protein (Actinobacillus succinogenes (strain ATCC 55618 / DSM 22257 / CCUG 43843 / 130Z)).